The primary structure comprises 406 residues: O-succinylhomoserine sulfhydrylase (406 aa).

The residue at position 219 (Lys219) is an N6-(pyridoxal phosphate)lysine.

Belongs to the trans-sulfuration enzymes family. MetZ subfamily. In terms of assembly, homotetramer. Pyridoxal 5'-phosphate is required as a cofactor.

It catalyses the reaction O-succinyl-L-homoserine + hydrogen sulfide = L-homocysteine + succinate. It participates in amino-acid biosynthesis; L-methionine biosynthesis via de novo pathway; L-homocysteine from O-succinyl-L-homoserine: step 1/1. Catalyzes the formation of L-homocysteine from O-succinyl-L-homoserine (OSHS) and hydrogen sulfide. The chain is O-succinylhomoserine sulfhydrylase from Mycobacterium tuberculosis (strain CDC 1551 / Oshkosh).